The primary structure comprises 202 residues: Putative 3-methyladenine DNA glycosylase (202 aa).

This sequence belongs to the DNA glycosylase MPG family.

This chain is Putative 3-methyladenine DNA glycosylase, found in Staphylococcus aureus (strain MRSA252).